The sequence spans 256 residues: Protein YIPF5 (256 aa).

Topologically, residues 1-125 (MSNFDNFNTD…ADGSIMNETD (125 aa)) are cytoplasmic. The chain crosses the membrane as a helical span at residues 126–146 (LAGPMVFCLAFGATLLLAGKI). Position 147 (Gln-147) is a topological domain, lumenal. A helical transmembrane segment spans residues 148–168 (FGYVYGISAMGCLGMYCLLNL). Residues 169 to 172 (MSMT) lie on the Cytoplasmic side of the membrane. A helical transmembrane segment spans residues 173 to 193 (GVSFGCVSSVLGYCLLPMIIL). At 194-195 (ST) the chain is on the lumenal side. The helical transmembrane segment at 196-216 (FAVIFSLQGILGIVLAALIIG) threads the bilayer. The Cytoplasmic portion of the chain corresponds to 217 to 235 (WCSFSASKIFISALAMDGQ). The chain crosses the membrane as a helical span at residues 236–256 (QLLVAYPCALLYGVFALISVF).

It belongs to the YIP1 family.

The protein resides in the endoplasmic reticulum membrane. It is found in the golgi apparatus. The protein localises to the cis-Golgi network membrane. Functionally, plays a role in transport between endoplasmic reticulum and Golgi. The sequence is that of Protein YIPF5 (yipf5) from Xenopus laevis (African clawed frog).